A 355-amino-acid polypeptide reads, in one-letter code: Tryptophan--tRNA ligase (355 aa).

ATP contacts are provided by residues 13–15 (QPT) and 21–22 (GN). Positions 14–22 (PTGNLHLGN) match the 'HIGH' region motif. Residue aspartate 137 participates in L-tryptophan binding. ATP contacts are provided by residues 149–151 (GED), isoleucine 208, and 217–221 (KMSKS). The 'KMSKS' region signature appears at 217–221 (KMSKS).

This sequence belongs to the class-I aminoacyl-tRNA synthetase family. Homodimer.

It localises to the cytoplasm. It catalyses the reaction tRNA(Trp) + L-tryptophan + ATP = L-tryptophyl-tRNA(Trp) + AMP + diphosphate + H(+). Functionally, catalyzes the attachment of tryptophan to tRNA(Trp). The sequence is that of Tryptophan--tRNA ligase from Brucella melitensis biotype 1 (strain ATCC 23456 / CCUG 17765 / NCTC 10094 / 16M).